A 172-amino-acid chain; its full sequence is Co-chaperone protein HscB homolog (172 aa).

The J domain maps to 2 to 74; that stretch reads NHFELFGLVE…LRRAEYLLSL (73 aa).

This sequence belongs to the HscB family. In terms of assembly, interacts with HscA and stimulates its ATPase activity.

Functionally, co-chaperone involved in the maturation of iron-sulfur cluster-containing proteins. Seems to help targeting proteins to be folded toward HscA. The sequence is that of Co-chaperone protein HscB homolog from Aeromonas salmonicida (strain A449).